A 407-amino-acid chain; its full sequence is Argininosuccinate synthase (407 aa).

10–18 (AYSGGLDTS) is an ATP binding site. 2 residues coordinate L-citrulline: Tyr-88 and Ser-93. Residue Gly-118 participates in ATP binding. Residues Thr-120, Asn-124, and Asp-125 each coordinate L-aspartate. Asn-124 is a binding site for L-citrulline. Arg-128, Ser-177, Ser-186, Glu-263, and Tyr-275 together coordinate L-citrulline.

The protein belongs to the argininosuccinate synthase family. Type 1 subfamily. Homotetramer.

The protein localises to the cytoplasm. It catalyses the reaction L-citrulline + L-aspartate + ATP = 2-(N(omega)-L-arginino)succinate + AMP + diphosphate + H(+). Its pathway is amino-acid biosynthesis; L-arginine biosynthesis; L-arginine from L-ornithine and carbamoyl phosphate: step 2/3. The polypeptide is Argininosuccinate synthase (Clostridium botulinum (strain Alaska E43 / Type E3)).